The chain runs to 196 residues: GTP cyclohydrolase-2 (196 aa).

49-53 (RIHSE) serves as a coordination point for GTP. Zn(2+) is bound by residues Cys54, Cys65, and Cys67. Residues Gln70, 92–94 (EGR), and Thr114 contribute to the GTP site. The Proton acceptor role is filled by Asp126. Arg128 (nucleophile) is an active-site residue. Residues Thr149 and Lys154 each coordinate GTP.

The protein belongs to the GTP cyclohydrolase II family. Homodimer. Requires Zn(2+) as cofactor.

The catalysed reaction is GTP + 4 H2O = 2,5-diamino-6-hydroxy-4-(5-phosphoribosylamino)-pyrimidine + formate + 2 phosphate + 3 H(+). It functions in the pathway cofactor biosynthesis; riboflavin biosynthesis; 5-amino-6-(D-ribitylamino)uracil from GTP: step 1/4. Catalyzes the conversion of GTP to 2,5-diamino-6-ribosylamino-4(3H)-pyrimidinone 5'-phosphate (DARP), formate and pyrophosphate. The protein is GTP cyclohydrolase-2 of Buchnera aphidicola subsp. Schizaphis graminum (strain Sg).